The primary structure comprises 700 residues: Interleukin-1 receptor accessory protein-like 1-B (700 aa).

Positions methionine 1–serine 18 are cleaved as a signal peptide. Over leucine 19–threonine 357 the chain is Extracellular. Residues threonine 32–threonine 134 enclose the Ig-like C2-type 1 domain. Cysteine 53 and cysteine 118 are oxidised to a cystine. Asparagine 63, asparagine 122, asparagine 138, asparagine 213, asparagine 264, and asparagine 331 each carry an N-linked (GlcNAc...) asparagine glycan. Ig-like C2-type domains are found at residues cysteine 143–threonine 232 and proline 242–serine 350. The cysteines at positions 164 and 216 are disulfide-linked. Cysteine 267 and cysteine 334 are oxidised to a cystine. A helical transmembrane segment spans residues valine 358–tyrosine 378. Residues lysine 379–tryptophan 700 are Cytoplasmic-facing. The TIR domain maps to lysine 403–methionine 559. Residue glutamate 491 is part of the active site. The segment at proline 564–tryptophan 700 is required for synaptic vesicle accumulation during synaptogenesis.

Belongs to the interleukin-1 receptor family.

It is found in the cell membrane. It localises to the cytoplasm. It carries out the reaction NAD(+) + H2O = ADP-D-ribose + nicotinamide + H(+). Functionally, may regulate secretion and presynaptic differentiation through inhibition of the activity of N-type voltage-gated calcium channel. During presynaptic differentiation may regulate both synaptic vesicle accumulation in axon terminals and subsequent axon terminal remodeling. The protein is Interleukin-1 receptor accessory protein-like 1-B (il1rapl1b) of Danio rerio (Zebrafish).